The following is a 459-amino-acid chain: MFS-type transporter SLC18B1 (459 aa).

Methionine 1 carries the post-translational modification N-acetylmethionine. Low complexity predominate over residues 1–10 (MDEAGSPAPA). Residues 1–27 (MDEAGSPAPAGTGGGDDPGGSTRETSR) are disordered. Over 1–33 (MDEAGSPAPAGTGGGDDPGGSTRETSRRLSREQ) the chain is Cytoplasmic. Serine 21 bears the Phosphoserine mark. The chain crosses the membrane as a helical span at residues 34-54 (IFVLVSAASMNLGCMMTYSIL). Residues 55–70 (GPFFPKEAEKKGASNT) are Extracellular-facing. The chain crosses the membrane as a helical span at residues 71–91 (MIGMIFGCYALFELLASLVFG). The Cytoplasmic segment spans residues 92–100 (KYLVHIGAK). Residues 101 to 121 (FMFIAGMFVSGGVTILFGVLD) traverse the membrane as a helical segment. Residues 122–127 (QLPEGP) lie on the Extracellular side of the membrane. The helical transmembrane segment at 128 to 148 (IFIAMCFLVRIVDAIGFGAAI) threads the bilayer. Residues 149-167 (TASSSILAKAFPNNVATVM) are Cytoplasmic-facing. The chain crosses the membrane as a helical span at residues 168 to 188 (GSLEVFSGLGLVAGPPLGGLL). Residues 189 to 195 (YQSFGYE) are Extracellular-facing. The chain crosses the membrane as a helical span at residues 196-216 (VPFIFLGCIVLLMIPLNLYIL). The Cytoplasmic portion of the chain corresponds to 217–235 (PSYAQESDPGKQSFWKLVT). The chain crosses the membrane as a helical span at residues 236 to 256 (LPKMGLLAFVIISLSSCFGFL). Over 257-274 (DPTLSLFVMEKFSLSTGY) the chain is Extracellular. The helical transmembrane segment at 275 to 295 (VGLVFLGLSLSYAISSPLFGL) threads the bilayer. Over 296-306 (LSDKMPTLRKW) the chain is Cytoplasmic. The chain crosses the membrane as a helical span at residues 307–327 (LLVFGNLITAGCYMLLGPVPL). Over 328 to 333 (LHIKSQ) the chain is Extracellular. A helical membrane pass occupies residues 334–354 (LWLLVLVLVVNGISAGMSIIP). Residues 355–379 (TFPEMLSCAYANGFEDSISTLGLVS) are Cytoplasmic-facing. A helical transmembrane segment spans residues 380–400 (GLFGAMWSVGAFMGPILGGFL). The Extracellular portion of the chain corresponds to 401-409 (CEKIGFEWA). A helical membrane pass occupies residues 410 to 430 (AAMQGLWTLLSGVSMALFYLW). Residues 431 to 459 (EDSTARRRSKAQNSLGTEEERAALLPNDT) lie on the Cytoplasmic side of the membrane. A disordered region spans residues 440–459 (KAQNSLGTEEERAALLPNDT).

Belongs to the major facilitator superfamily. In terms of tissue distribution, widely expressed, with highest expression in the lung, pancreas and kidney. High expression in the CNS, particularly in the hypothalamus, the thalamus and the cerebellum. In the forebrain, abundantly expressed in the telencephalon, especially in the cerebral cortex layers, except layer 1, as well as in the induseum griseum, the piriform area, the taenia tecta, dorsal part and in the entorhinal area, lateral part. Lower levels in the bed anterior olfactory nucleus, posteroventral part and in layer two of the olfactory tubercle. In the amygdala, high levels observed in the intercalated nucleus and the medial nucleus. In the diencephalon, expressed in the nuclei in both the hypothalamus and thalamus. Among the hypothalamic areas, strongest expression in the arcuate nucleus and in the ventromedial nucleus, as well as in the suprachiasmatic nucleus, anterior nucleus, especially in its central part, and in the magnocellular division of the paraventricular nucleus. In the thalamus, highest levels in the medial habenula. Expression also observed in the paraventricular thalamic nucleus, parataenial nucleus, central medial nucleus, intermediodorsal nucleus and lateral dorsal nucleus. In the hindbrain, detected in the cerebellum and in the pons. In the midbrain and the medulla, expression levels were modest. In the midbrain, highest expression in the periaqueductal gray and all subdivisions of the interpeduncular nucleus, except for the caudal part. In the pons, the strongest labeling was seen in the nucleus incertus and in the tegmental nucleus. Expressed in bone marrow-derived mast cells (at protein level).

The protein resides in the cytoplasmic vesicle. It localises to the secretory vesicle membrane. The protein localises to the secretory vesicle. It is found in the synaptic vesicle membrane. It catalyses the reaction spermine(in) + n H(+)(out) = spermine(out) + n H(+)(in). The catalysed reaction is spermidine(in) + n H(+)(out) = spermidine(out) + n H(+)(in). The enzyme catalyses serotonin(in) + n H(+)(out) = serotonin(out) + n H(+)(in). Proton-coupled polyamine antiporter involved in the translocation of polyamines from cytosol into secretory vesicles prior to their release via exocytosis. Uses the electrochemical proton gradient generated by a V-type proton-pumping ATPase to couple the efflux of protons with the uptake of a polyamine molecule. Facilitates vesicular storage of spermine and spermidine in astrocytes with an impact on glutamatergic neuronal transmission and memory formation. Upon antigen stimulation, regulates polyamine accumulation and release in mast cell secretory granules, which in turn potentiates mast cell degranulation and histamine secretion. The protein is MFS-type transporter SLC18B1 of Mus musculus (Mouse).